A 370-amino-acid chain; its full sequence is Binary larvicide subunit BinA (370 aa).

The propeptide occupies 1-6 (MRNLDF). Residues 1-155 (MRNLDFIDSF…LISNKEQIYL (155 aa)) form a beta-trefoil domain region. Cys-31 and Cys-47 are disulfide-bonded. Positions 156-370 (TLPSLPENEQ…NTKIITDDQN (215 aa)) are pore-forming domain.

Belongs to the toxin_10 family. As to quaternary structure, forms a heterodimer with BinB. In terms of processing, processed by proteases in the mosquito gut, probably at both the N- and C-termini.

Its subcellular location is the spore. It localises to the perispore. Its function is as follows. Component of a binary toxin active against Culex and some Aedes mosquito larvae. The individual subunits are not toxic. BinAB binds to the gastric caecum and posterior midgut of C.quinquefasciatus larvae; this subunit alone binds the entire larval gut. Binary toxin internalization into host gut cells requires both proteins. Toxic to Aedes atropalpus mosquito larvae; mortality towards both C.quinquefasciatus and A.atropalpus is maximal by 48 hours. A.aegypti is not very susceptible to this toxin. This chain is Binary larvicide subunit BinA (binA), found in Lysinibacillus sphaericus (Bacillus sphaericus).